The following is a 427-amino-acid chain: 3-phosphoshikimate 1-carboxyvinyltransferase (427 aa).

Residues Lys-20, Ser-21, and Arg-25 each contribute to the 3-phosphoshikimate site. Phosphoenolpyruvate is bound at residue Lys-20. Phosphoenolpyruvate contacts are provided by Gly-92 and Arg-120. 3-phosphoshikimate is bound by residues Ser-166, Gln-168, Asp-312, and Lys-339. Position 168 (Gln-168) interacts with phosphoenolpyruvate. Residue Asp-312 is the Proton acceptor of the active site. Positions 343 and 385 each coordinate phosphoenolpyruvate.

This sequence belongs to the EPSP synthase family. As to quaternary structure, monomer.

The protein localises to the cytoplasm. It carries out the reaction 3-phosphoshikimate + phosphoenolpyruvate = 5-O-(1-carboxyvinyl)-3-phosphoshikimate + phosphate. It participates in metabolic intermediate biosynthesis; chorismate biosynthesis; chorismate from D-erythrose 4-phosphate and phosphoenolpyruvate: step 6/7. In terms of biological role, catalyzes the transfer of the enolpyruvyl moiety of phosphoenolpyruvate (PEP) to the 5-hydroxyl of shikimate-3-phosphate (S3P) to produce enolpyruvyl shikimate-3-phosphate and inorganic phosphate. The protein is 3-phosphoshikimate 1-carboxyvinyltransferase of Streptococcus pneumoniae (strain 70585).